Consider the following 524-residue polypeptide: MLSTLRRTLFALLACASFIVHAAAPDEITTAWPVNVGPLNPHLYTPNQMFAQSMVYEPLVKYQADGSVIPWLAKSWTHSEDGKTWTFTLRDDVKFSNGEPFDAEAAAENFRAVLDNRQRHAWLELANQIVDVKALSKTELQITLKSAYYPFLQELALPRPFRFIAPSQFKNHETMNGIKAPIGTGPWILQESKLNQYDVFVRNENYWGEKPAIKKITFNVIPDPTTRAVAFETGDIDLLYGNEGLLPLDTFARFSQNPAYHTQLSQPIETVMLALNTAKAPTNELAVREALNYAVNKKSLIDNALYGTQQVADTLFAPSVPYANLGLKPSQYDPQKAKALLEKAGWTLPAGKDIREKNGQPLRIELSFIGTDALSKSMAEIIQADMRQIGADVSLIGEEESSIYARQRDGRFGMIFHRTWGAPYDPHAFLSSMRVPSHADFQAQQGLADKPLIDKEIGEVLATHDETQRQALYRDILTRLHDEAVYLPISYISMMVVSKPELGNIPYAPIATEIPFEQIKPVKP.

The signal sequence occupies residues Met-1–Ala-22.

The protein belongs to the bacterial solute-binding protein 5 family.

The protein resides in the periplasm. Involved in a nickel transport system, probably represents the nickel binder. The chain is Nickel-binding periplasmic protein (nikA) from Escherichia coli (strain K12).